Here is a 61-residue protein sequence, read N- to C-terminus: MAQVWKYYEIKDGKLIRKKKVCPRCGSFMAEHKDRYHCGKCGYTEWKVERPKIVIHGATIE.

Cys22, Cys25, Cys38, and Cys41 together coordinate Zn(2+). The C4-type zinc finger occupies 22 to 41 (CPRCGSFMAEHKDRYHCGKC).

The protein belongs to the eukaryotic ribosomal protein eS31 family. In terms of assembly, part of the 30S ribosomal subunit. It depends on Zn(2+) as a cofactor.

The polypeptide is Small ribosomal subunit protein eS31 (Nanoarchaeum equitans (strain Kin4-M)).